The sequence spans 580 residues: mRNA-decapping enzyme 1A (580 aa).

S62 is modified (phosphoserine). A compositionally biased stretch (basic and acidic residues) spans 132–141; the sequence is RSQQAARDKQ. 3 disordered regions span residues 132 to 154, 172 to 209, and 245 to 276; these read RSQQ…DHRP, QMGD…QDKS, and LPGD…NMGI. S142, S179, and S180 each carry phosphoserine. The segment covering 173–196 has biased composition (polar residues); that stretch reads MGDSNISSPGLQPSTQISNLGSTE. Low complexity predominate over residues 253–264; it reads EPSSFLPFSFEP. Phosphoserine occurs at positions 319 and 334. A compositionally biased stretch (polar residues) spans 343 to 359; sequence QAVKTTPRQRSPLSSQP. The tract at residues 343–371 is disordered; sequence QAVKTTPRQRSPLSSQPVPELSQASLAAS. T348 bears the Phosphothreonine mark. S353 is modified (phosphoserine). R376 bears the Asymmetric dimethylarginine mark. Residue T401 is modified to Phosphothreonine. S422, S520, S521, and S523 each carry phosphoserine. The tract at residues 510-533 is disordered; the sequence is TRSSDLERKASSPSPLTVGTSENQ. Residues 520-531 show a composition bias toward polar residues; sequence SSPSPLTVGTSE. Residues T526 and T529 each carry the phosphothreonine modification.

Belongs to the DCP1 family. In terms of assembly, forms a complex with EDC3, DCP2, DDX6 and EDC4/HEDLS, within this complex directly interacts with EDC3. Part of a cytoplasmic complex containing proteins involved in mRNA decay, including XRN1 and LSM1. Interacts with DCP1B. Interacts with DCP2. Interacts with DDX17 in an RNA-independent manner. Interacts with PNRC2. Interacts with SMAD4. Interacts with UPF1. Interacts with ZC3HAV1. Interacts with ZFP36L1. Interacts with NBDY. Interacts with DHX34; the interaction is RNA-independent. Post-translationally, (Microbial infection) Cleaved by porcine reproductive and respiratory syndrome virus serine protease nsp4 after Glu-238. The cleavage inhibits DCP1A function.

The protein resides in the cytoplasm. It is found in the P-body. Its subcellular location is the nucleus. It catalyses the reaction a 5'-end (N(7)-methyl 5'-triphosphoguanosine)-ribonucleoside in mRNA + H2O = N(7)-methyl-GDP + a 5'-end phospho-ribonucleoside in mRNA + 2 H(+). Its function is as follows. Necessary for the degradation of mRNAs, both in normal mRNA turnover and in nonsense-mediated mRNA decay. Removes the 7-methyl guanine cap structure from mRNA molecules, yielding a 5'-phosphorylated mRNA fragment and 7m-GDP. Contributes to the transactivation of target genes after stimulation by TGFB1. Essential for embryonic development. This Sus scrofa (Pig) protein is mRNA-decapping enzyme 1A (DCP1A).